Here is a 517-residue protein sequence, read N- to C-terminus: Amidophosphoribosyltransferase (517 aa).

Met1 carries the post-translational modification N-acetylmethionine. The propeptide occupies 1-11 (MELEELGIREE). The active-site Nucleophile is Cys12. A Glutamine amidotransferase type-2 domain is found at 12–261 (CGVFGCIASG…PGEIVEISRH (250 aa)). Residue Cys280 participates in [4Fe-4S] cluster binding. Residues Ser327, Asp389, and Asp390 each coordinate Mg(2+). [4Fe-4S] cluster is bound by residues Cys426, Cys503, and Cys506.

In the C-terminal section; belongs to the purine/pyrimidine phosphoribosyltransferase family. In terms of assembly, homotetramer. Mg(2+) is required as a cofactor. It depends on [4Fe-4S] cluster as a cofactor. Ubiquitously expressed.

It carries out the reaction 5-phospho-beta-D-ribosylamine + L-glutamate + diphosphate = 5-phospho-alpha-D-ribose 1-diphosphate + L-glutamine + H2O. The protein operates within purine metabolism; IMP biosynthesis via de novo pathway; N(1)-(5-phospho-D-ribosyl)glycinamide from 5-phospho-alpha-D-ribose 1-diphosphate: step 1/2. In terms of biological role, catalyzes the formation of phosphoribosylamine from phosphoribosylpyrophosphate (PRPP) and glutamine. This is Amidophosphoribosyltransferase (PPAT) from Homo sapiens (Human).